Here is a 244-residue protein sequence, read N- to C-terminus: Orotidine 5'-phosphate decarboxylase (244 aa).

Substrate contacts are provided by residues Asp-12, Lys-34, 61 to 70 (DLKLFDIPNT), Thr-125, Arg-187, Gln-196, Gly-216, and Arg-217. The active-site Proton donor is the Lys-63.

Belongs to the OMP decarboxylase family. Type 1 subfamily. In terms of assembly, homodimer.

It catalyses the reaction orotidine 5'-phosphate + H(+) = UMP + CO2. It functions in the pathway pyrimidine metabolism; UMP biosynthesis via de novo pathway; UMP from orotate: step 2/2. Its function is as follows. Catalyzes the decarboxylation of orotidine 5'-monophosphate (OMP) to uridine 5'-monophosphate (UMP). This is Orotidine 5'-phosphate decarboxylase from Dictyoglomus thermophilum (strain ATCC 35947 / DSM 3960 / H-6-12).